The primary structure comprises 588 residues: Adenine deaminase (588 aa).

The protein belongs to the metallo-dependent hydrolases superfamily. Adenine deaminase family. As to quaternary structure, homodimer. Mn(2+) serves as cofactor.

It catalyses the reaction adenine + H2O + H(+) = hypoxanthine + NH4(+). In Escherichia coli (strain 55989 / EAEC), this protein is Adenine deaminase.